Reading from the N-terminus, the 78-residue chain is Small nuclear ribonucleoprotein F (78 aa).

The Sm domain maps to 7 to 78 (NPKPFLQGLI…NVLWVGESTV (72 aa)).

The protein belongs to the snRNP Sm proteins family. SmF/LSm6 subfamily. As to quaternary structure, belongs to the 40S cdc5-associated complex (or cwf complex), a spliceosome sub-complex reminiscent of a late-stage spliceosome composed of the U2, U5 and U6 snRNAs and at least brr2, cdc5, cwf2/prp3, cwf3/syf1, cwf4/syf3, cwf5/ecm2, spp42/cwf6, cwf7/spf27, cwf8, cwf9, cwf10, cwf11, cwf12, prp45/cwf13, cwf14, cwf15, cwf16, cwf17, cwf18, cwf19, cwf20, cwf21, cwf22, cwf23, cwf24, cwf25, cwf26, cyp7/cwf27, cwf28, cwf29/ist3, lea1, msl1, prp5/cwf1, prp10, prp12/sap130, prp17, prp22, sap61, sap62, sap114, sap145, slu7, smb1, smd1, smd3, smf1, smg1 and syf2.

It is found in the nucleus. Its subcellular location is the cytoplasm. Plays a role in pre-mRNA splicing as a core component of the spliceosomal U1, U2, U4 and U5 small nuclear ribonucleoproteins (snRNPs), the building blocks of the spliceosome. This Schizosaccharomyces pombe (strain 972 / ATCC 24843) (Fission yeast) protein is Small nuclear ribonucleoprotein F (smf1).